The primary structure comprises 121 residues: Large ribosomal subunit protein bL19 (121 aa).

The protein belongs to the bacterial ribosomal protein bL19 family.

This protein is located at the 30S-50S ribosomal subunit interface and may play a role in the structure and function of the aminoacyl-tRNA binding site. The sequence is that of Large ribosomal subunit protein bL19 from Acidothermus cellulolyticus (strain ATCC 43068 / DSM 8971 / 11B).